The sequence spans 150 residues: Phosphoribosyl-AMP cyclohydrolase (150 aa).

Asp-92 is a binding site for Mg(2+). Cys-93 is a binding site for Zn(2+). 2 residues coordinate Mg(2+): Asp-94 and Asp-96. Residues Cys-111 and Cys-118 each coordinate Zn(2+).

The protein belongs to the PRA-CH family. In terms of assembly, homodimer. The cofactor is Mg(2+). It depends on Zn(2+) as a cofactor.

It is found in the cytoplasm. It catalyses the reaction 1-(5-phospho-beta-D-ribosyl)-5'-AMP + H2O = 1-(5-phospho-beta-D-ribosyl)-5-[(5-phospho-beta-D-ribosylamino)methylideneamino]imidazole-4-carboxamide. Its pathway is amino-acid biosynthesis; L-histidine biosynthesis; L-histidine from 5-phospho-alpha-D-ribose 1-diphosphate: step 3/9. Functionally, catalyzes the hydrolysis of the adenine ring of phosphoribosyl-AMP. The chain is Phosphoribosyl-AMP cyclohydrolase from Agrobacterium fabrum (strain C58 / ATCC 33970) (Agrobacterium tumefaciens (strain C58)).